Reading from the N-terminus, the 244-residue chain is Uracil phosphoribosyltransferase (244 aa).

Residues Lys-59, Arg-68, and 102 to 105 (YSKI) contribute to the GTP site. Arg-112 lines the 5-phospho-alpha-D-ribose 1-diphosphate pocket. Residue Arg-129 participates in GTP binding. Arg-137 is a 5-phospho-alpha-D-ribose 1-diphosphate binding site. Arg-158 lines the GTP pocket. Residues Asp-164 and 164–172 (DPMCATAGS) contribute to the 5-phospho-alpha-D-ribose 1-diphosphate site. Uracil contacts are provided by residues Ile-229 and 234 to 236 (GDF). Asp-235 lines the 5-phospho-alpha-D-ribose 1-diphosphate pocket.

The protein belongs to the UPRTase family. As to quaternary structure, monomer. Forms homodimers in presence of substrates and homotetramers in the presence of GTP. The cofactor is Mg(2+).

It catalyses the reaction UMP + diphosphate = 5-phospho-alpha-D-ribose 1-diphosphate + uracil. The protein operates within pyrimidine metabolism; UMP biosynthesis via salvage pathway; UMP from uracil: step 1/1. Allosterically activated by GTP. Binding of GTP leads to 5-time activation of the enzyme. In terms of biological role, catalyzes the conversion of uracil and 5-phospho-alpha-D-ribose 1-diphosphate (PRPP) to UMP and diphosphate. This is Uracil phosphoribosyltransferase (uprt) from Toxoplasma gondii.